Here is a 326-residue protein sequence, read N- to C-terminus: MEKNRRKKDDAGVMTKTLAGVAALTFLVSFICSSYDITFSHVISTIDVILEESEYYRSTKEWMASSIDATWHEVSIPSRKAEHLQAINPEVDVAAGGKHVFTPEQLHFFDGSRDSKPCYLAILGRVYDVDGKKEYYGPGKSYHHFAGRDATRAFTTGDFTENGLVASTHGLSHDELLSIRDWVSFYDKEYPLVGVVADLYYDSDGQPTAELTDVLARVEKANEYRKAQAVEIEVFPPCNSEYNQNGGRVWCSTKSGGVERQWAGVPRKLIEQTTKKFRCACVKNFGPGVSGAEEVKTSSNRGDLDHPDLELFPDCSPTSNSCKIVS.

The signal sequence occupies residues 1 to 34 (MEKNRRKKDDAGVMTKTLAGVAALTFLVSFICSS). Residues 98–197 (KHVFTPEQLH…KEYPLVGVVA (100 aa)) enclose the Cytochrome b5 heme-binding domain.

The protein belongs to the cytochrome b5 family. MAPR subfamily.

It is found in the secreted. Functionally, heme-binding protein. This Caenorhabditis briggsae protein is Neuferricin homolog.